Consider the following 221-residue polypeptide: Probable septum site-determining protein MinC (221 aa).

Belongs to the MinC family. Interacts with MinD and FtsZ.

Its function is as follows. Cell division inhibitor that blocks the formation of polar Z ring septums. Rapidly oscillates between the poles of the cell to destabilize FtsZ filaments that have formed before they mature into polar Z rings. Prevents FtsZ polymerization. In Shewanella halifaxensis (strain HAW-EB4), this protein is Probable septum site-determining protein MinC.